Reading from the N-terminus, the 444-residue chain is Adenylosuccinate synthetase (444 aa).

GTP-binding positions include 12 to 18 (GDEGKGK) and 40 to 42 (GHT). The active-site Proton acceptor is D13. Mg(2+)-binding residues include D13 and G40. Residues 13-16 (DEGK), 38-41 (NAGH), T128, R142, Q223, T238, and R302 contribute to the IMP site. The active-site Proton donor is the H41. 298–304 (TTTGRRR) contributes to the substrate binding site. Residues R304, 330–332 (KLD), and 412–414 (SLG) each bind GTP.

Belongs to the adenylosuccinate synthetase family. Homodimer. Mg(2+) serves as cofactor.

The protein localises to the cytoplasm. It catalyses the reaction IMP + L-aspartate + GTP = N(6)-(1,2-dicarboxyethyl)-AMP + GDP + phosphate + 2 H(+). The protein operates within purine metabolism; AMP biosynthesis via de novo pathway; AMP from IMP: step 1/2. Its function is as follows. Plays an important role in the de novo pathway of purine nucleotide biosynthesis. Catalyzes the first committed step in the biosynthesis of AMP from IMP. The polypeptide is Adenylosuccinate synthetase (Synechococcus sp. (strain ATCC 27144 / PCC 6301 / SAUG 1402/1) (Anacystis nidulans)).